A 354-amino-acid chain; its full sequence is Protein RecA (354 aa).

68–75 (GPESSGKT) serves as a coordination point for ATP.

The protein belongs to the RecA family.

It localises to the cytoplasm. In terms of biological role, can catalyze the hydrolysis of ATP in the presence of single-stranded DNA, the ATP-dependent uptake of single-stranded DNA by duplex DNA, and the ATP-dependent hybridization of homologous single-stranded DNAs. It interacts with LexA causing its activation and leading to its autocatalytic cleavage. This is Protein RecA from Synechocystis sp. (strain ATCC 27184 / PCC 6803 / Kazusa).